The chain runs to 371 residues: Protease PrtS (371 aa).

H169 serves as a coordination point for Zn(2+). Residue E170 is part of the active site. Positions 173 and 193 each coordinate Zn(2+). H273 (proton donor) is an active-site residue. The interval 352–371 is disordered; the sequence is KEEDKDKGKDEGKDKAETKV.

It belongs to the peptidase M4 family. The cofactor is Zn(2+).

Its subcellular location is the secreted. Inhibited by 8 mM 1,10-phenanthroline, but not by EDTA or PMSF. Metalloprotease involved in the inhibition of insect antibacterial peptides. Reduces the antibacterial activity of G.mellonella hemolymph by 50%. Reduces the antibacterial activity of cecropin A by 80% and completely inhibits cecropin B. This is Protease PrtS from Photorhabdus sp. (strain Az29).